The sequence spans 146 residues: Anti-sigma F factor (146 aa).

This sequence belongs to the anti-sigma-factor family.

The catalysed reaction is L-seryl-[protein] + ATP = O-phospho-L-seryl-[protein] + ADP + H(+). The enzyme catalyses L-threonyl-[protein] + ATP = O-phospho-L-threonyl-[protein] + ADP + H(+). In terms of biological role, binds to sigma F and blocks its ability to form an RNA polymerase holoenzyme (E-sigma F). Phosphorylates SpoIIAA on a serine residue. This phosphorylation may enable SpoIIAA to act as an anti-anti-sigma factor that counteracts SpoIIAB and thus releases sigma F from inhibition. This chain is Anti-sigma F factor, found in Bacillus cereus (strain ATCC 14579 / DSM 31 / CCUG 7414 / JCM 2152 / NBRC 15305 / NCIMB 9373 / NCTC 2599 / NRRL B-3711).